The chain runs to 588 residues: Aspartate--tRNA ligase (588 aa).

An L-aspartate-binding site is contributed by glutamate 174. An aspartate region spans residues glutamine 198–lysine 201. Residue arginine 220 participates in L-aspartate binding. ATP-binding positions include arginine 220–glutamate 222 and glutamine 229. Histidine 448 contacts L-aspartate. Glutamate 482 provides a ligand contact to ATP. An L-aspartate-binding site is contributed by arginine 489. Glycine 534–arginine 537 provides a ligand contact to ATP.

It belongs to the class-II aminoacyl-tRNA synthetase family. Type 1 subfamily. As to quaternary structure, homodimer.

The protein localises to the cytoplasm. The catalysed reaction is tRNA(Asp) + L-aspartate + ATP = L-aspartyl-tRNA(Asp) + AMP + diphosphate. Functionally, catalyzes the attachment of L-aspartate to tRNA(Asp) in a two-step reaction: L-aspartate is first activated by ATP to form Asp-AMP and then transferred to the acceptor end of tRNA(Asp). This chain is Aspartate--tRNA ligase, found in Xanthomonas oryzae pv. oryzae (strain MAFF 311018).